A 315-amino-acid polypeptide reads, in one-letter code: Methionyl-tRNA formyltransferase (315 aa).

117 to 120 (SLLP) lines the (6S)-5,6,7,8-tetrahydrofolate pocket.

Belongs to the Fmt family.

It carries out the reaction L-methionyl-tRNA(fMet) + (6R)-10-formyltetrahydrofolate = N-formyl-L-methionyl-tRNA(fMet) + (6S)-5,6,7,8-tetrahydrofolate + H(+). Functionally, attaches a formyl group to the free amino group of methionyl-tRNA(fMet). The formyl group appears to play a dual role in the initiator identity of N-formylmethionyl-tRNA by promoting its recognition by IF2 and preventing the misappropriation of this tRNA by the elongation apparatus. This Methylibium petroleiphilum (strain ATCC BAA-1232 / LMG 22953 / PM1) protein is Methionyl-tRNA formyltransferase.